A 314-amino-acid polypeptide reads, in one-letter code: Methionyl-tRNA formyltransferase (314 aa).

Residue 110–113 (SLLP) coordinates (6S)-5,6,7,8-tetrahydrofolate.

The protein belongs to the Fmt family.

It catalyses the reaction L-methionyl-tRNA(fMet) + (6R)-10-formyltetrahydrofolate = N-formyl-L-methionyl-tRNA(fMet) + (6S)-5,6,7,8-tetrahydrofolate + H(+). In terms of biological role, attaches a formyl group to the free amino group of methionyl-tRNA(fMet). The formyl group appears to play a dual role in the initiator identity of N-formylmethionyl-tRNA by promoting its recognition by IF2 and preventing the misappropriation of this tRNA by the elongation apparatus. This chain is Methionyl-tRNA formyltransferase, found in Bacillus cereus (strain B4264).